We begin with the raw amino-acid sequence, 704 residues long: DNA ligase (704 aa).

NAD(+) contacts are provided by residues 43-47 (DADYD), 92-93 (SL), and Glu-124. Catalysis depends on Lys-126, which acts as the N6-AMP-lysine intermediate. Residues Arg-147, Glu-182, Lys-298, and Lys-322 each contribute to the NAD(+) site. 4 residues coordinate Zn(2+): Cys-427, Cys-430, Cys-445, and Cys-451. A BRCT domain is found at 625–704 (PVASPVAGRI…DGWLRLIGDA (80 aa)).

The protein belongs to the NAD-dependent DNA ligase family. LigA subfamily. Mg(2+) serves as cofactor. It depends on Mn(2+) as a cofactor.

The catalysed reaction is NAD(+) + (deoxyribonucleotide)n-3'-hydroxyl + 5'-phospho-(deoxyribonucleotide)m = (deoxyribonucleotide)n+m + AMP + beta-nicotinamide D-nucleotide.. Functionally, DNA ligase that catalyzes the formation of phosphodiester linkages between 5'-phosphoryl and 3'-hydroxyl groups in double-stranded DNA using NAD as a coenzyme and as the energy source for the reaction. It is essential for DNA replication and repair of damaged DNA. The protein is DNA ligase of Cereibacter sphaeroides (strain KD131 / KCTC 12085) (Rhodobacter sphaeroides).